The sequence spans 687 residues: Chloride channel protein ClC-Kb (687 aa).

Over 1-50 the chain is Cytoplasmic; sequence MEEFVGLREGSSGNPVTLQELWGPCPRIRRGIRGGLEWLKQKLFRLGEDW. 2 helical membrane-spanning segments follow: residues 51–82 and 91–111; these read YFLMTLGVLMALVSCAMDLAVESVVRAHQWLY and LRYLSWTVYPVALVSFSSGFS. Positions 116 to 127 form an intramembrane region, helical; the sequence is PSSGGSGIPEVK. Position 121 (S121) interacts with chloride. 2 helical membrane passes run 141 to 160 and 161 to 180; these read IKNFGAKVVGLSCTLACGST and LFLGKVGPFVHLSVMMAAYL. N193 carries N-linked (GlcNAc...) asparagine glycosylation. The segment at residues 203–224 is an intramembrane region (helical); it reads AAAAVGVATVFAAPFSGVLFSI. The chain crosses the membrane as a helical span at residues 236–255; sequence YWRGFFAATCGAFMFRLLAV. Ca(2+)-binding residues include E259, E261, D278, and E281. A run of 2 helical transmembrane segments spans residues 282–310 and 325–342; these read IFFFVALGGLCGILGSAYLFCQRIFFGFI and PVYSALATLVLASITYPP. An intramembrane region (helical) is located at residues 349–360; the sequence is ASRLSMKQHLDS. Transmembrane regions (helical) follow at residues 400–420 and 421–440; these read GTLAFFLVMKFWMLILATTIP and MPAGYFMPIFVYGAAIGRLF. F426 lines the chloride pocket. The segment at residues 464-496 is an intramembrane region (helical); sequence GGYALAGAAAFSGAVTHTISTALLAFEVTGQIV. The chain crosses the membrane as a helical span at residues 500-520; sequence PVLMAVLAANAIAQSCQPSFY. Residues 521 to 687 are Cytoplasmic-facing; that stretch reads DGTVIVKKLP…SNLTNPPAPK (167 aa). CBS domains are found at residues 551–609 and 626–684; these read MNHS…EPPS and CPTE…TNPP.

This sequence belongs to the chloride channel (TC 2.A.49) family. CLCNKB subfamily. In terms of assembly, homodimer. Interacts with BSND. In terms of processing, N-glycosylated.

It is found in the basolateral cell membrane. It catalyses the reaction chloride(in) = chloride(out). It carries out the reaction iodide(out) = iodide(in). The catalysed reaction is nitrate(in) = nitrate(out). The enzyme catalyses bromide(in) = bromide(out). Activated by extracellular Ca(2+) and inhibited by extracellular acidic pH. In terms of biological role, anion-selective channel permeable to small monovalent anions with ion selectivity for chloride &gt; bromide &gt; nitrate &gt; iodide. Forms a homodimeric channel where each subunit has its own ion conduction pathway. May conduct double-barreled currents controlled by two types of gates, two fast gates that control each subunit independently and a slow common gate that opens and shuts off both subunits simultaneously. Assembles with the regulatory subunit BSND/Barttin for sorting at the basolateral plasma membrane domain and functional switch to the ion conducting state. CLCNKB:BSND channels display mostly a linear current-voltage relationship controlled by common gate. Mediates chloride conductance along nephron segments, namely the thick ascending limb of Henle's loop, convoluted tubule and the collecting duct, contributing to the maintenance of systemic acid-base and electrolyte homeostasis. Conducts chloride currents in the stria vascularis of the inner ear to establish the endocochlear potential necessary for normal hearing. The sequence is that of Chloride channel protein ClC-Kb from Homo sapiens (Human).